The following is a 268-amino-acid chain: 2,5-diamino-6-ribosylamino-4(3H)-pyrimidinone 5'-phosphate reductase (268 aa).

Residues Thr-68, Asp-72, 103 to 106 (SNLR), and 191 to 195 (GAELL) contribute to the NADP(+) site.

Belongs to the HTP reductase family. As to quaternary structure, homodimer.

The enzyme catalyses 2,5-diamino-6-(1-D-ribitylamino)pyrimidin-4(3H)-one 5'-phosphate + NADP(+) = 2,5-diamino-6-(1-D-ribosylamino)pyrimidin-4(3H)-one 5'-phosphate + NADPH + H(+). It catalyses the reaction 2,5-diamino-6-(1-D-ribitylamino)pyrimidin-4(3H)-one 5'-phosphate + NAD(+) = 2,5-diamino-6-(1-D-ribosylamino)pyrimidin-4(3H)-one 5'-phosphate + NADH + H(+). The protein operates within cofactor biosynthesis; riboflavin biosynthesis. Catalyzes an early step in riboflavin biosynthesis, the NADPH-dependent reduction of the ribose side chain of 2,5-diamino-6-ribosylamino-4(3H)-pyrimidinone 5'-phosphate, yielding 2,5-diamino-6-ribitylamino-4(3H)-pyrimidinone 5'-phosphate. The chain is 2,5-diamino-6-ribosylamino-4(3H)-pyrimidinone 5'-phosphate reductase from Schizosaccharomyces pombe (strain 972 / ATCC 24843) (Fission yeast).